The sequence spans 567 residues: Potassium-transporting ATPase potassium-binding subunit (567 aa).

The next 12 membrane-spanning stretches (helical) occupy residues Gly-5–Gly-25, Thr-64–Leu-84, Gly-136–Ile-156, Leu-179–Pro-199, Ile-254–Phe-274, Trp-285–Ala-305, Val-328–Val-350, Ile-375–Phe-395, Met-421–Leu-441, Ile-459–Thr-481, Ile-486–Ile-506, and Leu-529–Ala-549.

This sequence belongs to the KdpA family. As to quaternary structure, the system is composed of three essential subunits: KdpA, KdpB and KdpC.

It is found in the cell inner membrane. Its function is as follows. Part of the high-affinity ATP-driven potassium transport (or Kdp) system, which catalyzes the hydrolysis of ATP coupled with the electrogenic transport of potassium into the cytoplasm. This subunit binds the periplasmic potassium ions and delivers the ions to the membrane domain of KdpB through an intramembrane tunnel. The polypeptide is Potassium-transporting ATPase potassium-binding subunit (Rhizobium rhizogenes (strain K84 / ATCC BAA-868) (Agrobacterium radiobacter)).